The sequence spans 445 residues: Tubulin beta-1 chain (445 aa).

Positions 1–4 (MREI) match the MREI motif motif. The GTP site is built by Q11, E69, S138, G142, T143, G144, N204, and N226. A Mg(2+)-binding site is contributed by E69. Residues 424–445 (QYQDATADEQGEFEEEGEEDEA) are disordered. The span at 429–445 (TADEQGEFEEEGEEDEA) shows a compositional bias: acidic residues. E438 is subject to 5-glutamyl polyglutamate.

The protein belongs to the tubulin family. As to quaternary structure, dimer of alpha and beta chains. A typical microtubule is a hollow water-filled tube with an outer diameter of 25 nm and an inner diameter of 15 nM. Alpha-beta heterodimers associate head-to-tail to form protofilaments running lengthwise along the microtubule wall with the beta-tubulin subunit facing the microtubule plus end conferring a structural polarity. Microtubules usually have 13 protofilaments but different protofilament numbers can be found in some organisms and specialized cells. It depends on Mg(2+) as a cofactor. Some glutamate residues at the C-terminus are polyglycylated, resulting in polyglycine chains on the gamma-carboxyl group. Glycylation is mainly limited to tubulin incorporated into axonemes (cilia and flagella) whereas glutamylation is prevalent in neuronal cells, centrioles, axonemes, and the mitotic spindle. Both modifications can coexist on the same protein on adjacent residues, and lowering polyglycylation levels increases polyglutamylation, and reciprocally. The precise function of polyglycylation is still unclear. Post-translationally, some glutamate residues at the C-terminus are polyglutamylated, resulting in polyglutamate chains on the gamma-carboxyl group. Polyglutamylation plays a key role in microtubule severing by spastin (SPAST). SPAST preferentially recognizes and acts on microtubules decorated with short polyglutamate tails: severing activity by SPAST increases as the number of glutamates per tubulin rises from one to eight, but decreases beyond this glutamylation threshold. In terms of tissue distribution, highly expressed in skeletal muscle.

It localises to the cytoplasm. It is found in the cytoskeleton. Functionally, tubulin is the major constituent of microtubules, a cylinder consisting of laterally associated linear protofilaments composed of alpha- and beta-tubulin heterodimers. Microtubules grow by the addition of GTP-tubulin dimers to the microtubule end, where a stabilizing cap forms. Below the cap, tubulin dimers are in GDP-bound state, owing to GTPase activity of alpha-tubulin. This is Tubulin beta-1 chain from Gallus gallus (Chicken).